Reading from the N-terminus, the 740-residue chain is DNA (cytosine-5)-methyltransferase 3C (740 aa).

Disordered regions lie at residues 75-99 and 248-312; these read LTGD…PVMP and FKPT…DVTN. An ADD domain is found at 309-441; it reads DVTNNKGNLE…LQDFFTTDPD (133 aa). The GATA-type; atypical zinc finger occupies 320–350; sequence HCLSCGRKDPVSFHPLFEGGLCQSCRDRFLE. The PHD-type; atypical zinc finger occupies 361-417; that stretch reads QSYCTVCCEGRELLLCSNTSCCRCFCVECLEVLVGAGTAEDVKLQEPWSCYMCLPQR. The 279-residue stretch at 462–740 folds into the SAM-dependent MTase C5-type domain; sequence IRVLSLFDGI…APLKDHFACE (279 aa). S-adenosyl-L-methionine-binding residues include Ile471, Thr473, Glu492, Asp514, and Ile515. The active site involves Cys538. S-adenosyl-L-methionine-binding residues include Arg719 and Trp721.

It belongs to the class I-like SAM-binding methyltransferase superfamily. C5-methyltransferase family. Homodimer. Interacts with DNMT3L. Interacts with SPOCD1; recruiting Dnmt3C to transposons. In terms of tissue distribution, specifically expressed in testis.

Its subcellular location is the nucleus. It carries out the reaction a 2'-deoxycytidine in DNA + S-adenosyl-L-methionine = a 5-methyl-2'-deoxycytidine in DNA + S-adenosyl-L-homocysteine + H(+). DNA methyltransferase that specifically methylates the promoters of evolutionarily young retrotransposons in the male germline. De novo methylation and subsequent repression of transposable elements prevents their mobilization, which is essential for germline integrity. Compared to Dnmt3a and Dnmt3b, shows lower DNA methyltransferase efficiency. This Mus musculus (Mouse) protein is DNA (cytosine-5)-methyltransferase 3C.